The sequence spans 438 residues: Coenzyme A disulfide reductase (438 aa).

Residue 8-33 coordinates FAD; it reads GAVAGGATCASQIRRLDKESEIIVFE. 5 residues coordinate substrate: T15, Q19, R22, S39, and N42. Catalysis depends on C43, which acts as the Nucleophile. Catalysis depends on C43, which acts as the Redox-active. Residue K71 participates in substrate binding. Position 151–166 (151–166) interacts with NADP(+); sequence ALVVGAGYISLEVLEN. An FAD-binding site is contributed by 267 to 277; that stretch reads TNIPNIYALGD. Substrate is bound at residue H299. Y419 provides a ligand contact to FAD. Substrate is bound at residue K427.

Belongs to the class-III pyridine nucleotide-disulfide oxidoreductase family. Homodimer. It depends on FAD as a cofactor.

It carries out the reaction NADP(+) + 2 CoA = CoA-disulfide + NADPH + H(+). In terms of biological role, catalyzes specifically the NADPH-dependent reduction of coenzyme A disulfide. The protein is Coenzyme A disulfide reductase of Staphylococcus epidermidis (strain ATCC 35984 / DSM 28319 / BCRC 17069 / CCUG 31568 / BM 3577 / RP62A).